Here is a 264-residue protein sequence, read N- to C-terminus: MDSRPIGFLDSGVGGLTVVKEMFRQLPEEEVIFIGDQARAPYGPRPAQQIREFTWQMVNFLLTKNVKMIVIACNTATAVAWQEIKEKLDIPVLGVILPGASAAIKSTNSGKVGIIGTPMTVKSDAYRQKIQALSPNTAVVSLACPKFVPIVESNQMSSSLAKKVVYETLSPLVGKLDTLILGCTHYPLLRPIIQNVMGAEVKLIDSGAETVRDISVLLNYFEINHNWQNKHGGHHFYTTASPKGFKEIAEQWLSQEINVERIVL.

Substrate-binding positions include 10 to 11 (DS) and 42 to 43 (YG). Residue cysteine 73 is the Proton donor/acceptor of the active site. 74-75 (NT) provides a ligand contact to substrate. The active-site Proton donor/acceptor is the cysteine 183. Position 184 to 185 (184 to 185 (TH)) interacts with substrate.

The protein belongs to the aspartate/glutamate racemases family.

It catalyses the reaction L-glutamate = D-glutamate. It participates in cell wall biogenesis; peptidoglycan biosynthesis. Its function is as follows. Provides the (R)-glutamate required for cell wall biosynthesis. The sequence is that of Glutamate racemase from Streptococcus agalactiae serotype III (strain NEM316).